The chain runs to 258 residues: Type III pantothenate kinase (258 aa).

6-13 (DVGNTNTV) contacts ATP. Substrate-binding positions include Tyr100 and 107–110 (GADR). The Proton acceptor role is filled by Asp109. Residue Asp129 participates in K(+) binding. Thr132 provides a ligand contact to ATP. Thr184 serves as a coordination point for substrate.

The protein belongs to the type III pantothenate kinase family. As to quaternary structure, homodimer. NH4(+) serves as cofactor. The cofactor is K(+).

It localises to the cytoplasm. The catalysed reaction is (R)-pantothenate + ATP = (R)-4'-phosphopantothenate + ADP + H(+). The protein operates within cofactor biosynthesis; coenzyme A biosynthesis; CoA from (R)-pantothenate: step 1/5. Its activity is regulated as follows. Not regulated by feedback inhibition by CoA and its thioesters as described for many other pantothenate kinases. Not inhibited by N-pentylpantothenamide (N5-Pan), and this compound cannot act as a substrate either. Functionally, catalyzes the phosphorylation of pantothenate (Pan), the first step in CoA biosynthesis. Cannot utilize a phosphoryl donor other than ATP. In Bacillus subtilis (strain 168), this protein is Type III pantothenate kinase (coaX).